The following is a 384-amino-acid chain: S-adenosylmethionine synthase (384 aa).

Position 15 (H15) interacts with ATP. D17 lines the Mg(2+) pocket. E43 contacts K(+). Positions 56 and 99 each coordinate L-methionine. The segment at 99-109 (QSPDINQGVDR) is flexible loop. Residues 164 to 166 (DAK), 230 to 231 (RF), D239, 245 to 246 (RK), A262, and K266 each bind ATP. D239 contributes to the L-methionine binding site. Residue K270 participates in L-methionine binding.

It belongs to the AdoMet synthase family. As to quaternary structure, homotetramer; dimer of dimers. Mg(2+) is required as a cofactor. The cofactor is K(+).

It localises to the cytoplasm. It catalyses the reaction L-methionine + ATP + H2O = S-adenosyl-L-methionine + phosphate + diphosphate. It functions in the pathway amino-acid biosynthesis; S-adenosyl-L-methionine biosynthesis; S-adenosyl-L-methionine from L-methionine: step 1/1. In terms of biological role, catalyzes the formation of S-adenosylmethionine (AdoMet) from methionine and ATP. The overall synthetic reaction is composed of two sequential steps, AdoMet formation and the subsequent tripolyphosphate hydrolysis which occurs prior to release of AdoMet from the enzyme. The polypeptide is S-adenosylmethionine synthase (Enterobacter sp. (strain 638)).